A 307-amino-acid chain; its full sequence is Ribosomal RNA small subunit methyltransferase H (307 aa).

S-adenosyl-L-methionine-binding positions include 31 to 33, aspartate 51, tyrosine 83, aspartate 97, and glutamine 104; that span reads GGH.

The protein belongs to the methyltransferase superfamily. RsmH family.

The protein localises to the cytoplasm. It catalyses the reaction cytidine(1402) in 16S rRNA + S-adenosyl-L-methionine = N(4)-methylcytidine(1402) in 16S rRNA + S-adenosyl-L-homocysteine + H(+). Its function is as follows. Specifically methylates the N4 position of cytidine in position 1402 (C1402) of 16S rRNA. This is Ribosomal RNA small subunit methyltransferase H from Buchnera aphidicola subsp. Cinara cedri (strain Cc).